Reading from the N-terminus, the 531-residue chain is Ribosomal protein uS12 methylthiotransferase RimO (531 aa).

Polar residues-rich tracts occupy residues 1 to 19 and 55 to 67; these read MPNI…SQPA and HNQN…SSEV. The interval 1–77 is disordered; sequence MPNISTESVN…VSAASAKTTT (77 aa). A compositionally biased stretch (low complexity) spans 68–77; the sequence is VSAASAKTTT. The MTTase N-terminal domain occupies 88–198; it reads PKIGFVSLGC…VIRAVALHVP (111 aa). Positions 97, 133, 162, 236, 240, and 243 each coordinate [4Fe-4S] cluster. The region spanning 222-459 is the Radical SAM core domain; that stretch reads LTPSHYAYLK…MTLQQDISAQ (238 aa). The 70-residue stretch at 462-531 folds into the TRAM domain; it reads QEKIGKTLMV…EYDLFASYKG (70 aa).

Belongs to the methylthiotransferase family. RimO subfamily. Requires [4Fe-4S] cluster as cofactor.

It is found in the cytoplasm. It catalyses the reaction L-aspartate(89)-[ribosomal protein uS12]-hydrogen + (sulfur carrier)-SH + AH2 + 2 S-adenosyl-L-methionine = 3-methylsulfanyl-L-aspartate(89)-[ribosomal protein uS12]-hydrogen + (sulfur carrier)-H + 5'-deoxyadenosine + L-methionine + A + S-adenosyl-L-homocysteine + 2 H(+). Catalyzes the methylthiolation of an aspartic acid residue of ribosomal protein uS12. This is Ribosomal protein uS12 methylthiotransferase RimO from Psychrobacter cryohalolentis (strain ATCC BAA-1226 / DSM 17306 / VKM B-2378 / K5).